Consider the following 235-residue polypeptide: Large ribosomal subunit protein uL1 (235 aa).

Belongs to the universal ribosomal protein uL1 family. As to quaternary structure, part of the 50S ribosomal subunit.

Binds directly to 23S rRNA. The L1 stalk is quite mobile in the ribosome, and is involved in E site tRNA release. In terms of biological role, protein L1 is also a translational repressor protein, it controls the translation of the L11 operon by binding to its mRNA. In Renibacterium salmoninarum (strain ATCC 33209 / DSM 20767 / JCM 11484 / NBRC 15589 / NCIMB 2235), this protein is Large ribosomal subunit protein uL1.